Reading from the N-terminus, the 1010-residue chain is MAGNDCGALLDEELSSFFLNYLSDTQGGESGEEQLCADLPELDLSQLDASDFDSATCFGELQWCPETSETEPSQYSPDDSEFFQIDSENEALLAALTKTLDDIPEDDVGLAAFPGLDEGDTPSCTPASPAPLSVPPSPALERLLSPVSEVDELSLLQKLLLATSSPTASSDALKDGATWSQTSLSSRSQRPCVKVDGTQDKKTPMLRSQSRPCTELHKHLTSVLPCPRGKACSPPPHPSPQLLSKEDEEVGEDCPSPWPAPASPQDSLGQDTANPNSAQVPKDDVRAMVQLIRYMHTYCLPQRKLPQRASEPIPQSCSSPLRKVPPRSRQTPKAFWTEFSILRELLAQDILCDVSKPYRLATPVYASLTPQSRTRPPKDSQASPAHSAMAEEVRITASPKSTGPRPSLRPLRLEVKRDVNKPARQKREEDEEEEEEEEEEEEKEDEEEEWGRKRPGRGLPWTKLGRKMDSSVCPVRRSRRLNPELGPWLTFTDEPLGALPSMCLATETHDLEEELGGLTDSSQGQQLPLGSQIPTLESPCESGCGDTDEDPSCPRPPSRDSPRCLMLALSQSDPLGKKSFEESLTVELCGTAGLTPPTTPPYKPMEEDPFKQDTKHSPGQDTAPSLPSPETLQLTATPGASHKLPKRHPERSELLSHLQHATTQPVSQAGQKRPFSCSFGDHDYCQVIRPEAALQRKVLRSWEPIKVHLEDLAHQGATLPVETKTPRREADQNCDPTPKDSMQLRDHEIRASLTKHFGLLETALEEEDLASCKSPEYDTVFEDSSSSSGESSFLLEEEEEEGGEEDDEGEDSGVSPPCSDHCPYQSPPSKASRQLCSRSRSSSGSSSCSSWSPATRKNFRLESRGPCSDGTPSARHAKKRREKAIGEGRVVYIRNLSGDMSSRELKKRFEVFGEIVECQVLRRSKRGQKHGFITFRCSEHAALSVRNGATLRKRNEPSFHLSYGGLRHFRWPRYTDYDPTSEESLPSSGKSKYEAMDFDSLLKEAQQSLH.

Residues 1-91 (MAGNDCGALL…FFQIDSENEA (91 aa)) form an abolishes DNA transcriptional activity when missing region. The tract at residues 115 to 134 (GLDEGDTPSCTPASPAPLSV) is disordered. Positions 140–144 (LERLL) match the LXXLL motif 1 motif. 2 positions are modified to phosphoserine: serine 145 and serine 148. An LXXLL motif 2 motif is present at residues 156–160 (LQKLL). 3 disordered regions span residues 165–214 (SPTA…RPCT), 227–282 (PRGK…QVPK), and 306–329 (PQRA…PRSR). 2 stretches are compositionally biased toward polar residues: residues 178–189 (TWSQTSLSSRSQ) and 264–279 (PQDS…NSAQ). The LXXLL motif 3 motif lies at 342-346 (LRELL). Residues 369 to 384 (TPQSRTRPPKDSQASP) are compositionally biased toward polar residues. 3 disordered regions span residues 369–475 (TPQS…VCPV), 517–567 (GLTD…CLML), and 590–674 (GTAG…QKRP). A Phosphoserine modification is found at serine 383. Over residues 411-428 (LRLEVKRDVNKPARQKRE) the composition is skewed to basic and acidic residues. Residues 429 to 449 (EDEEEEEEEEEEEEKEDEEEE) are compositionally biased toward acidic residues. The span at 521 to 532 (SSQGQQLPLGSQ) shows a compositional bias: low complexity. Basic and acidic residues predominate over residues 604 to 618 (PMEEDPFKQDTKHSP). Polar residues-rich tracts occupy residues 619 to 638 (GQDT…TATP) and 659 to 670 (QHATTQPVSQAG). Residue serine 628 is modified to Phosphoserine. Positions 681–684 (DHDY) match the HCFC1-binding-motif (HBM) motif. Disordered regions lie at residues 714-744 (HQGA…SMQL) and 778-881 (DTVF…KKRR). Residues 782 to 794 (EDSSSSSGESSFL) are compositionally biased toward low complexity. Residues 795 to 811 (LEEEEEEGGEEDDEGED) show a composition bias toward acidic residues. Residues 832–852 (SRQLCSRSRSSSGSSSCSSWS) show a composition bias toward low complexity. Residues 889-963 (RVVYIRNLSG…RNEPSFHLSY (75 aa)) enclose the RRM domain.

As to quaternary structure, interacts with estrogen receptor alpha/ESR1. Interacts with Sterol regulatory binding transcription factor 1/SREBF1, PPAR-alpha/PPARA, thyroid hormone receptor beta/THRB and host cell factor/HCFC1. Interacts with Estrogen-related receptor gamma/ESRRG and alpha/ESRRA. Interacts with PRDM16. As to expression, ubiquitous with higher expression in heart, brown adipose tissue.

Its subcellular location is the nucleus. Its function is as follows. Plays a role of stimulator of transcription factors and nuclear receptors activities. Activates transcriptional activity of estrogen receptor alpha, nuclear respiratory factor 1 (NRF1) and glucocorticoid receptor in the presence of glucocorticoids. May play a role in constitutive non-adrenergic-mediated mitochondrial biogenesis as suggested by increased basal oxygen consumption and mitochondrial number when overexpressed. May be part of the pathways regulating the elevation of gluconeogenesis, beta-oxidation of fatty acids and ketogenesis during fasting. Stimulates SREBP-mediated lipogenic gene expression in the liver. Induces energy expenditure and antagonizes obesity when overexpressed. Also induces the expression of mitochondrial genes involved in oxidative metabolism. Induces the expression of PERM1 in the skeletal muscle in an ESRRA-dependent manner. The chain is Peroxisome proliferator-activated receptor gamma coactivator 1-beta (Ppargc1b) from Rattus norvegicus (Rat).